We begin with the raw amino-acid sequence, 702 residues long: MA3 DOMAIN-CONTAINING TRANSLATION REGULATORY FACTOR 3 (702 aa).

The interval 1 to 100 is disordered; it reads MEGFLTDQQR…PNDPNYDSGE (100 aa). The span at 53–65 shows a compositional bias: basic residues; that stretch reads VKHRRSHAGRSIR. Positions 81-91 are enriched in basic and acidic residues; that stretch reads IDTDGDYHIDP. In terms of domain architecture, MI 1 spans 116–237; that stretch reads DYKKAAASII…PPAFLPRAAK (122 aa). The Nuclear localization signal 1 signature appears at 267 to 274; it reads ERRWGGQT. 3 MI domains span residues 280 to 401, 414 to 535, and 577 to 697; these read EVKK…PSGE, RFKE…EISS, and DAKD…SLTE. The short motif at 615–622 is the Nuclear localization signal 2 element; sequence VKKALVMG.

The protein belongs to the PDCD4 family. In terms of assembly, interacts with EIN2, ETR2 and EIN4. Binds to EIF4A1. The association with ribosomes is modulated by cellular energy status and TOR activity. Mostly expressed in vegetative tissues, such as leaves and stems, and, to a lower extent, in roots and reproductive tissues, such as flower buds and flowers. Expressed in seedlings, roots, cauline leaf tips and flowers.

It is found in the nucleus. The protein localises to the cytoplasm. It localises to the cytosol. In terms of biological role, involved in target of rapamycin (TOR)-regulated translation control, especially under energy-deficient conditions. Involved in the regulation of the ethylene-mediated signaling pathway. Involved in salt stress responses. Reduced cotyledons size and early flowering. The protein is MA3 DOMAIN-CONTAINING TRANSLATION REGULATORY FACTOR 3 of Arabidopsis thaliana (Mouse-ear cress).